The following is a 319-amino-acid chain: ATP-dependent 6-phosphofructokinase (319 aa).

Gly-11 contributes to the ATP binding site. 21–25 is a binding site for ADP; sequence RAVVR. Residues 72 to 73 and 102 to 105 each bind ATP; these read RC and GDGS. Asp-103 is a Mg(2+) binding site. 125–127 serves as a coordination point for substrate; that stretch reads TID. Asp-127 serves as the catalytic Proton acceptor. Arg-154 contributes to the ADP binding site. 169 to 171 contributes to the substrate binding site; it reads MGR. Residues 185–187, Arg-211, and 213–215 contribute to the ADP site; these read GAE and KKH. Residues Glu-222, Arg-243, and 249 to 252 each bind substrate; that span reads HIQR.

This sequence belongs to the phosphofructokinase type A (PFKA) family. ATP-dependent PFK group I subfamily. Prokaryotic clade 'B1' sub-subfamily. Homotetramer. Requires Mg(2+) as cofactor.

It is found in the cytoplasm. The enzyme catalyses beta-D-fructose 6-phosphate + ATP = beta-D-fructose 1,6-bisphosphate + ADP + H(+). It participates in carbohydrate degradation; glycolysis; D-glyceraldehyde 3-phosphate and glycerone phosphate from D-glucose: step 3/4. With respect to regulation, allosterically activated by ADP and other diphosphonucleosides, and allosterically inhibited by phosphoenolpyruvate. In terms of biological role, catalyzes the phosphorylation of D-fructose 6-phosphate to fructose 1,6-bisphosphate by ATP, the first committing step of glycolysis. This is ATP-dependent 6-phosphofructokinase from Lysinibacillus sphaericus (Bacillus sphaericus).